Here is a 1437-residue protein sequence, read N- to C-terminus: Protein CC2D2B (1437 aa).

This is Protein CC2D2B from Homo sapiens (Human).